Here is a 245-residue protein sequence, read N- to C-terminus: Probable 2-phosphosulfolactate phosphatase (245 aa).

It belongs to the ComB family. The cofactor is Mg(2+).

It catalyses the reaction (2R)-O-phospho-3-sulfolactate + H2O = (2R)-3-sulfolactate + phosphate. The chain is Probable 2-phosphosulfolactate phosphatase from Trichormus variabilis (strain ATCC 29413 / PCC 7937) (Anabaena variabilis).